A 227-amino-acid chain; its full sequence is Cytosolic-abundant heat soluble protein 106094 (227 aa).

A disordered region spans residues 1 to 28; the sequence is MEAMNMNIPRDAMFVPPPESEQNGYHEK. The stretch at 90-140 forms a coiled coil; it reads VEEARRDYAAKTRENEMLGQQYEKELERKSEAYRKHQEVEADKIRKELEKQ. CAHS motif regions lie at residues 122–140 and 159–177; these read YRKH…LEKQ and QKRM…MDRE. The segment at 198-227 is disordered; sequence LDSSAAGTESGGHVVSQSEKFTERNREMKR. Over residues 217–227 the composition is skewed to basic and acidic residues; that stretch reads KFTERNREMKR.

Belongs to the Cytosolic-abundant heat soluble protein (CAHS) family.

The protein resides in the cytoplasm. In terms of biological role, CAHS proteins are cytosolic heat soluble proteins that seem to contribute to the anhydrobiosis in tardigrades, but their specific mechanisms are yet to be identified. It is possible that protection during anhydrobiosis might occur via the stabilization of vitrifying small molecules such as sugars, but not via the direct glass transition of CAHS proteins themselves. This is Cytosolic-abundant heat soluble protein 106094 from Paramacrobiotus richtersi (Water bear).